Consider the following 191-residue polypeptide: Ribosomal RNA small subunit methyltransferase G (191 aa).

Residues G59, 111–112 (IE), and R124 contribute to the S-adenosyl-L-methionine site.

It belongs to the methyltransferase superfamily. RNA methyltransferase RsmG family.

Its subcellular location is the cytoplasm. Its function is as follows. Specifically methylates the N7 position of a guanine in 16S rRNA. This is Ribosomal RNA small subunit methyltransferase G from Mycoplasma pneumoniae (strain ATCC 29342 / M129 / Subtype 1) (Mycoplasmoides pneumoniae).